The following is a 137-amino-acid chain: Putative pre-16S rRNA nuclease (137 aa).

The protein belongs to the YqgF nuclease family.

It localises to the cytoplasm. In terms of biological role, could be a nuclease involved in processing of the 5'-end of pre-16S rRNA. This is Putative pre-16S rRNA nuclease from Bacillus cereus (strain 03BB102).